A 503-amino-acid chain; its full sequence is Cytochrome P450 11B1, mitochondrial (503 aa).

The transit peptide at 1–24 directs the protein to the mitochondrion; that stretch reads MALRAKAEVCMAVPWLSLQRAQAL. Position 450 (Cys450) interacts with heme.

Belongs to the cytochrome P450 family. The cofactor is heme. In terms of tissue distribution, expressed in the zona fasciculata/reticularis of the adrenal cortex.

It is found in the mitochondrion inner membrane. It catalyses the reaction a steroid + 2 reduced [adrenodoxin] + O2 + 2 H(+) = an 11beta-hydroxysteroid + 2 oxidized [adrenodoxin] + H2O. The enzyme catalyses 11-deoxycortisol + 2 reduced [adrenodoxin] + O2 + 2 H(+) = cortisol + 2 oxidized [adrenodoxin] + H2O. It carries out the reaction 21-hydroxyprogesterone + 2 reduced [adrenodoxin] + O2 + 2 H(+) = corticosterone + 2 oxidized [adrenodoxin] + H2O. Its pathway is steroid biosynthesis; glucocorticoid biosynthesis. The protein operates within steroid hormone biosynthesis. Functionally, a cytochrome P450 monooxygenase involved in the biosynthesis of adrenal corticoids. Catalyzes a variety of reactions that are essential for many species, including detoxification, defense, and the formation of endogenous chemicals like steroid hormones. Steroid 11beta, 18- and 19-hydroxylase with preferred regioselectivity at 11beta, then 18, and lastly 19. Catalyzes the hydroxylation of 11-deoxycortisol and 11-deoxycorticosterone (21-hydroxyprogesterone) at 11beta position, yielding cortisol or corticosterone, respectively, but cannot produce aldosterone. Mechanistically, uses molecular oxygen inserting one oxygen atom into a substrate for hydroxylation and reducing the second into a water molecule. Two electrons are provided by NADPH via a two-protein mitochondrial transfer system comprising flavoprotein FDXR (adrenodoxin/ferredoxin reductase) and nonheme iron-sulfur protein FDX1 or FDX2 (adrenodoxin/ferredoxin). Due to its lack of 18-oxidation activity, it is incapable of generating aldosterone. Could also be involved in the androgen metabolic pathway. This is Cytochrome P450 11B1, mitochondrial from Homo sapiens (Human).